The sequence spans 27 residues: Secretin (27 aa).

Leucine amide is present on leucine 27.

This sequence belongs to the glucagon family.

The protein localises to the secreted. In terms of biological role, hormone involved in different processes, such as regulation of the pH of the duodenal content, food intake and water homeostasis. Exerts its biological effects by binding to secretin receptor (SCTR), a G-protein coupled receptor expressed in the basolateral domain of several cells. Acts as a key gastrointestinal hormone by regulating the pH of the duodenal content. Secreted by S cells of the duodenum in the crypts of Lieberkuehn and regulates the pH of the duodenum by (1) inhibiting the secretion of gastric acid from the parietal cells of the stomach and (2) stimulating the production of bicarbonate (NaHCO(3)) from the ductal cells of the pancreas. Production of bicarbonate is essential to neutralize the pH and ensure no damage is done to the small intestine by the gastric acid. In addition to regulating the pH of the duodenal content, plays a central role in diet induced thermogenesis: acts as a non-sympathetic brown fat (BAT) activator mediating prandial thermogenesis, which consequentially induces satiation. Mechanistically, secretin released by the gut after a meal binds to secretin receptor (SCTR) in brown adipocytes, activating brown fat thermogenesis by stimulating lipolysis, which is sensed in the brain and promotes satiation. Also able to stimulate lipolysis in white adipocytes. Also plays an important role in cellular osmoregulation: released into the systemic circulation in response to hyperosmolality and acts at different levels in the hypothalamus, pituitary and kidney to regulate water homeostasis. Also plays a role in the central nervous system, possibly by acting as a neuropeptide hormone: required for hippocampal synaptic function and neural progenitor cells maintenance. The chain is Secretin from Oryctolagus cuniculus (Rabbit).